Reading from the N-terminus, the 513-residue chain is ATP synthase subunit alpha (513 aa).

An ATP-binding site is contributed by 169-176 (GDRQIGKT).

It belongs to the ATPase alpha/beta chains family. F-type ATPases have 2 components, CF(1) - the catalytic core - and CF(0) - the membrane proton channel. CF(1) has five subunits: alpha(3), beta(3), gamma(1), delta(1), epsilon(1). CF(0) has three main subunits: a(1), b(2) and c(9-12). The alpha and beta chains form an alternating ring which encloses part of the gamma chain. CF(1) is attached to CF(0) by a central stalk formed by the gamma and epsilon chains, while a peripheral stalk is formed by the delta and b chains.

It is found in the cell inner membrane. It carries out the reaction ATP + H2O + 4 H(+)(in) = ADP + phosphate + 5 H(+)(out). Produces ATP from ADP in the presence of a proton gradient across the membrane. The alpha chain is a regulatory subunit. The polypeptide is ATP synthase subunit alpha (Francisella tularensis subsp. tularensis (strain SCHU S4 / Schu 4)).